Here is a 144-residue protein sequence, read N- to C-terminus: Putative HTH-type transcriptional regulator aq_268 (144 aa).

An HTH rrf2-type domain is found at 2–133 (IFSDTVRYAL…KGTTIKDLIN (132 aa)).

In Aquifex aeolicus (strain VF5), this protein is Putative HTH-type transcriptional regulator aq_268.